The sequence spans 185 residues: Orotate phosphoribosyltransferase (185 aa).

5-phospho-alpha-D-ribose 1-diphosphate is bound by residues Arg-98, Lys-99, Lys-102, His-104, and 128–136 (EDVTTTGGS). Orotate-binding residues include Thr-132 and Arg-160.

It belongs to the purine/pyrimidine phosphoribosyltransferase family. PyrE subfamily. In terms of assembly, homodimer. It depends on Mg(2+) as a cofactor.

The catalysed reaction is orotidine 5'-phosphate + diphosphate = orotate + 5-phospho-alpha-D-ribose 1-diphosphate. The protein operates within pyrimidine metabolism; UMP biosynthesis via de novo pathway; UMP from orotate: step 1/2. Its function is as follows. Catalyzes the transfer of a ribosyl phosphate group from 5-phosphoribose 1-diphosphate to orotate, leading to the formation of orotidine monophosphate (OMP). This is Orotate phosphoribosyltransferase from Bradyrhizobium sp. (strain ORS 278).